The sequence spans 343 residues: Phosphoribosylformylglycinamidine cyclo-ligase (343 aa).

It belongs to the AIR synthase family.

Its subcellular location is the cytoplasm. It carries out the reaction 2-formamido-N(1)-(5-O-phospho-beta-D-ribosyl)acetamidine + ATP = 5-amino-1-(5-phospho-beta-D-ribosyl)imidazole + ADP + phosphate + H(+). The protein operates within purine metabolism; IMP biosynthesis via de novo pathway; 5-amino-1-(5-phospho-D-ribosyl)imidazole from N(2)-formyl-N(1)-(5-phospho-D-ribosyl)glycinamide: step 2/2. This is Phosphoribosylformylglycinamidine cyclo-ligase from Staphylococcus epidermidis (strain ATCC 35984 / DSM 28319 / BCRC 17069 / CCUG 31568 / BM 3577 / RP62A).